A 256-amino-acid chain; its full sequence is Short-chain dehydrogenase/reductase cdmF (256 aa).

The NADP(+) site is built by Val-11, Asp-57, and Arg-119. Residue Ser-137 is the Proton donor of the active site. Residues Tyr-151, Lys-155, Gly-183, and Asn-187 each coordinate NADP(+). Residue Tyr-151 is the Proton acceptor of the active site. Lys-155 acts as the Lowers pKa of active site Tyr in catalysis.

This sequence belongs to the short-chain dehydrogenases/reductases (SDR) family.

It catalyses the reaction 3-hydroxypentacecilide A + A = chrodrimanin C + AH2. The catalysed reaction is chrodrimanin F + A = chrodrimanin H + AH2. Its pathway is secondary metabolite biosynthesis; terpenoid biosynthesis. In terms of biological role, short-chain dehydrogenase/reductase; part of the gene cluster that mediates the biosynthesis of chrodrimanin B, a meroterpenoid that acts as a potent blocker of insect GABA-gated chloride channels. The first step of the pathway is the biosynthesis of 6-hydroxymellein by the polyketide synthase cdmE. The prenyltransferase cdmH acts as a 6-hydroxymellein 5-farnesyltransferase and produces the hydrophobic metabolite verruculide C. The FAD-dependent monooxygenase cdmI further converts verruculide C into verruculide B. The terpene cyclase cdmG then produced the pentacyclic molecule 3-hydroxypentacecilide A, the backbone structure of chrodrimanin B, via folding the farnesyl moiety of the substrate into the chair-boat conformation. The short-chain dehydrogenase/reductase cdmF functions as the 3-OH dehydrogenase that oxidizes the C-3 hydroxyl group of 3-hydroxypentacecilide A and produces chrodrimanin C, the dehydrogenated product of 3-hydroxypentacecilide A. The cytochrome P450 monooxygenase cdmJ then accepts both 3-hydroxypentacecilide A and chrodrimanin C and functions as a C-7-beta-hydroxylase to produce respectively chrodrimanin H and chrodrimanin F. The dioxygenase cdmA accepts chrodrimanin H to afford chrodrimanin E, which is further transformed to chrodrimanin A by the dioxygenase cdmD. CdmA can also accept chrodrimanin C as substrate to convert it into verruculide A, which is further converted into chrodrimanin T by cdmD. The last step of the biosynthesis is proposed to be performed by the acetyltransferase cdmC which acetylates chrodrimanin A to yield chrodrimanin B. The pathway may also lead to the production of additional shunt products, including chrodrimanins T and U. In Talaromyces verruculosus (Penicillium verruculosum), this protein is Short-chain dehydrogenase/reductase cdmF.